The chain runs to 66 residues: Large ribosomal subunit protein bL35 (66 aa).

Residues 25–45 form a disordered region; that stretch reads QAAGKRHGMSKRPQKMKRNAR. The segment covering 28-44 has biased composition (basic residues); the sequence is GKRHGMSKRPQKMKRNA.

It belongs to the bacterial ribosomal protein bL35 family.

In Rhodospirillum centenum (strain ATCC 51521 / SW), this protein is Large ribosomal subunit protein bL35.